Reading from the N-terminus, the 316-residue chain is 4-hydroxy-3-methylbut-2-enyl diphosphate reductase (316 aa).

A [4Fe-4S] cluster-binding site is contributed by C12. H41 and H74 together coordinate (2E)-4-hydroxy-3-methylbut-2-enyl diphosphate. Dimethylallyl diphosphate contacts are provided by H41 and H74. Residues H41 and H74 each contribute to the isopentenyl diphosphate site. C96 serves as a coordination point for [4Fe-4S] cluster. A (2E)-4-hydroxy-3-methylbut-2-enyl diphosphate-binding site is contributed by H124. H124 provides a ligand contact to dimethylallyl diphosphate. An isopentenyl diphosphate-binding site is contributed by H124. E126 functions as the Proton donor in the catalytic mechanism. T169 serves as a coordination point for (2E)-4-hydroxy-3-methylbut-2-enyl diphosphate. C199 is a [4Fe-4S] cluster binding site. (2E)-4-hydroxy-3-methylbut-2-enyl diphosphate-binding residues include S227, S228, N229, and S271. S227, S228, N229, and S271 together coordinate dimethylallyl diphosphate. Positions 227, 228, 229, and 271 each coordinate isopentenyl diphosphate.

The protein belongs to the IspH family. [4Fe-4S] cluster is required as a cofactor.

It catalyses the reaction isopentenyl diphosphate + 2 oxidized [2Fe-2S]-[ferredoxin] + H2O = (2E)-4-hydroxy-3-methylbut-2-enyl diphosphate + 2 reduced [2Fe-2S]-[ferredoxin] + 2 H(+). The enzyme catalyses dimethylallyl diphosphate + 2 oxidized [2Fe-2S]-[ferredoxin] + H2O = (2E)-4-hydroxy-3-methylbut-2-enyl diphosphate + 2 reduced [2Fe-2S]-[ferredoxin] + 2 H(+). It participates in isoprenoid biosynthesis; dimethylallyl diphosphate biosynthesis; dimethylallyl diphosphate from (2E)-4-hydroxy-3-methylbutenyl diphosphate: step 1/1. Its pathway is isoprenoid biosynthesis; isopentenyl diphosphate biosynthesis via DXP pathway; isopentenyl diphosphate from 1-deoxy-D-xylulose 5-phosphate: step 6/6. Functionally, catalyzes the conversion of 1-hydroxy-2-methyl-2-(E)-butenyl 4-diphosphate (HMBPP) into a mixture of isopentenyl diphosphate (IPP) and dimethylallyl diphosphate (DMAPP). Acts in the terminal step of the DOXP/MEP pathway for isoprenoid precursor biosynthesis. The protein is 4-hydroxy-3-methylbut-2-enyl diphosphate reductase of Stenotrophomonas maltophilia (strain K279a).